A 207-amino-acid polypeptide reads, in one-letter code: Phosphoserine phosphatase (207 aa).

Residue Asp-8 is the Nucleophile of the active site. Asp-8 and Asp-10 together coordinate Mg(2+). The active-site Proton donor is Asp-10. Substrate-binding positions include Glu-17, Arg-53, Ser-96–Gly-97, and Lys-141. Asp-164 contacts Mg(2+). Asn-167 is a binding site for substrate.

The protein belongs to the HAD-like hydrolase superfamily. SerB family. Mg(2+) is required as a cofactor.

It carries out the reaction O-phospho-L-serine + H2O = L-serine + phosphate. It catalyses the reaction O-phospho-D-serine + H2O = D-serine + phosphate. The protein operates within amino-acid biosynthesis; L-serine biosynthesis; L-serine from 3-phospho-D-glycerate: step 3/3. The protein is Phosphoserine phosphatase of Campylobacter jejuni subsp. doylei (strain ATCC BAA-1458 / RM4099 / 269.97).